The primary structure comprises 221 residues: Small ribosomal subunit protein uS4c (221 aa).

Residues 26 to 53 (RKRTDNRCMPGQHRKKRNDSTKKTKNSK) form a disordered region. A compositionally biased stretch (basic residues) spans 37–53 (QHRKKRNDSTKKTKNSK). In terms of domain architecture, S4 RNA-binding spans 103 to 161 (MRLDNIVFRLGMAPTIPAARQLVNHGHIVVNNKKVDISSYQCQSQDVISVTKNKTIRTL).

Belongs to the universal ribosomal protein uS4 family. In terms of assembly, part of the 30S ribosomal subunit. Contacts protein S5. The interaction surface between S4 and S5 is involved in control of translational fidelity.

The protein localises to the plastid. Its subcellular location is the chloroplast. In terms of biological role, one of the primary rRNA binding proteins, it binds directly to 16S rRNA where it nucleates assembly of the body of the 30S subunit. With S5 and S12 plays an important role in translational accuracy. This chain is Small ribosomal subunit protein uS4c (rps4), found in Pleurastrum terricola (Filamentous green alga).